The following is a 211-amino-acid chain: Large ribosomal subunit protein uL4 (211 aa).

Over residues Gln-41–Thr-53 the composition is skewed to polar residues. Positions Gln-41–Ile-78 are disordered. Over residues Gly-60–Gly-71 the composition is skewed to basic residues.

This sequence belongs to the universal ribosomal protein uL4 family. Part of the 50S ribosomal subunit.

Functionally, one of the primary rRNA binding proteins, this protein initially binds near the 5'-end of the 23S rRNA. It is important during the early stages of 50S assembly. It makes multiple contacts with different domains of the 23S rRNA in the assembled 50S subunit and ribosome. Its function is as follows. Forms part of the polypeptide exit tunnel. The chain is Large ribosomal subunit protein uL4 from Prochlorococcus marinus (strain MIT 9313).